The chain runs to 147 residues: Large ribosomal subunit protein uL16 (147 aa).

Belongs to the universal ribosomal protein uL16 family. As to quaternary structure, part of the 50S ribosomal subunit.

Its function is as follows. Binds 23S rRNA and is also seen to make contacts with the A and possibly P site tRNAs. The chain is Large ribosomal subunit protein uL16 from Caldicellulosiruptor bescii (strain ATCC BAA-1888 / DSM 6725 / KCTC 15123 / Z-1320) (Anaerocellum thermophilum).